Consider the following 610-residue polypeptide: Propanediol dehydratase-reactivating factor large subunit (610 aa).

11–13 is an ATP binding site; sequence NSS. Threonine 105, aspartate 166, and aspartate 183 together coordinate Mg(2+). ATP contacts are provided by residues 459-462, 557-558, and arginine 591; these read EEIK and GS.

This sequence belongs to the DdrA/PduG family. In terms of assembly, forms a heterotetramer PduG(2)/PduH(2). Mg(2+) is required as a cofactor.

Its subcellular location is the bacterial microcompartment. It carries out the reaction ATP + H2O = ADP + phosphate + H(+). It functions in the pathway polyol metabolism; 1,2-propanediol degradation. Large subunit of the propanediol dehydratase-reactivating factor (DDR), which reactivates suicidally inhibited adenosylcobalamin-dependent propanediol dehydratase (diol dehydratase, DDH) found in the bacterial microcompartment (BMC) dedicated to 1,2-propanediol (1,2-PD) degradation. Reactivates inactivated DDH in the presence of ATP, Mg(2+) and free adenosylcobalamin (AdoCbl), by mediating the exchange of the tightly bound damaged cofactor AdoCbl for a free intact one. This subunit contains the adenosine nucleotide binding site. Its function is as follows. Expression of a cosmid containing the full 21-gene pdu operon in E.coli allows E.coli to grow on 1,2-propanediol (1,2-PD) with the appearance of bacterial microcompartments (BMC) in its cytoplasm. In terms of biological role, the 1,2-PD-specific bacterial microcompartment (BMC) concentrates low levels of 1,2-PD catabolic enzymes, concentrates volatile reaction intermediates thus enhancing pathway flux and keeps the level of toxic, mutagenic propionaldehyde low. The polypeptide is Propanediol dehydratase-reactivating factor large subunit (Citrobacter freundii).